The following is a 153-amino-acid chain: SsrA-binding protein (153 aa).

Residues 129-153 (KREDMKKKDQSREMAQALRERSKSH) form a disordered region.

The protein belongs to the SmpB family.

The protein localises to the cytoplasm. Required for rescue of stalled ribosomes mediated by trans-translation. Binds to transfer-messenger RNA (tmRNA), required for stable association of tmRNA with ribosomes. tmRNA and SmpB together mimic tRNA shape, replacing the anticodon stem-loop with SmpB. tmRNA is encoded by the ssrA gene; the 2 termini fold to resemble tRNA(Ala) and it encodes a 'tag peptide', a short internal open reading frame. During trans-translation Ala-aminoacylated tmRNA acts like a tRNA, entering the A-site of stalled ribosomes, displacing the stalled mRNA. The ribosome then switches to translate the ORF on the tmRNA; the nascent peptide is terminated with the 'tag peptide' encoded by the tmRNA and targeted for degradation. The ribosome is freed to recommence translation, which seems to be the essential function of trans-translation. This is SsrA-binding protein from Geobacter metallireducens (strain ATCC 53774 / DSM 7210 / GS-15).